Reading from the N-terminus, the 441-residue chain is MFVKSETKTRGGLTAWFALTSVYKSEQFKSMAIAYTSPTAAILCEDAFQSMYAQMVCGLCQRHDVVRFGAVFAAALVRAIRFLQLNWGQLAADIEAGELGPHVADPSVREAVSGILRSDAELAEFVRIECSKGDWAGIITRIWPNTKYVDAIVTGAMAQYIRTLQYYSGGLPIVSTSYASSECFFGINLRPVCDPSEVSYTIMPNTAYFEFLPVGEVVDATNLVDLARVEVGREYEVVITTYAGLSRYRVGDVLRVTGFHNAAPQFRFVRRQSVLLSVELDKTDEAELHRAVERASSALLRPRGVSVAEYTSRACTERIPGHYVVYWELLTESPVGAGDGDTVDGETLGRCCLEMEEALSAVYRQGRVADGSIGPLEIRIVRPGTFEEVMDLAVSRGTSIGQYKVPQCVTVPSVVELLDSRVVSSQFSPALPHWIPTPRSD.

Belongs to the IAA-amido conjugating enzyme family. Expressed in etiolated seedlings and roots.

Functionally, may catalyze the synthesis of indole-3-acetic acid (IAA)-amino acid conjugates, providing a mechanism for the plant to cope with the presence of excess auxin. The polypeptide is Probable indole-3-acetic acid-amido synthetase GH3.9 (GH3.9) (Oryza sativa subsp. japonica (Rice)).